Reading from the N-terminus, the 483-residue chain is Proline--tRNA ligase (483 aa).

It belongs to the class-II aminoacyl-tRNA synthetase family. ProS type 3 subfamily. Homodimer.

It is found in the cytoplasm. It carries out the reaction tRNA(Pro) + L-proline + ATP = L-prolyl-tRNA(Pro) + AMP + diphosphate. Functionally, catalyzes the attachment of proline to tRNA(Pro) in a two-step reaction: proline is first activated by ATP to form Pro-AMP and then transferred to the acceptor end of tRNA(Pro). The chain is Proline--tRNA ligase from Natranaerobius thermophilus (strain ATCC BAA-1301 / DSM 18059 / JW/NM-WN-LF).